The following is a 318-amino-acid chain: ATP-dependent (S)-NAD(P)H-hydrate dehydratase (318 aa).

Positions 3–313 (AREVFKRVIP…KEIGPAFDSL (311 aa)) constitute a YjeF C-terminal domain. Residues Gly-119 and 172–178 (NTNEFKR) contribute to the (6S)-NADPHX site. Residues 210 to 214 (KGSKD) and 229 to 238 (TSLRRCGGQG) each bind ATP. (6S)-NADPHX is bound at residue Asp-239.

It belongs to the NnrD/CARKD family. It depends on Mg(2+) as a cofactor.

The protein resides in the cytoplasm. The enzyme catalyses (6S)-NADHX + ATP = ADP + phosphate + NADH + H(+). The catalysed reaction is (6S)-NADPHX + ATP = ADP + phosphate + NADPH + H(+). In terms of biological role, catalyzes the dehydration of the S-form of NAD(P)HX at the expense of ATP, which is converted to ADP. Together with NAD(P)HX epimerase, which catalyzes the epimerization of the S- and R-forms, the enzyme allows the repair of both epimers of NAD(P)HX, a damaged form of NAD(P)H that is a result of enzymatic or heat-dependent hydration. In Batrachochytrium dendrobatidis (strain JAM81 / FGSC 10211) (Frog chytrid fungus), this protein is ATP-dependent (S)-NAD(P)H-hydrate dehydratase.